A 177-amino-acid chain; its full sequence is Nucleoside triphosphate/diphosphate phosphatase (177 aa).

Arg-23 functions as the Proton donor in the catalytic mechanism. Mg(2+) is bound by residues Asn-87, Asp-103, Asp-105, Asp-107, Asp-120, and Glu-123.

Belongs to the Ntdp family. Mg(2+) serves as cofactor.

It carries out the reaction a ribonucleoside 5'-triphosphate + H2O = a ribonucleoside 5'-diphosphate + phosphate + H(+). The enzyme catalyses a ribonucleoside 5'-diphosphate + H2O = a ribonucleoside 5'-phosphate + phosphate + H(+). Has nucleoside phosphatase activity towards nucleoside triphosphates and nucleoside diphosphates. This Streptococcus pyogenes serotype M1 protein is Nucleoside triphosphate/diphosphate phosphatase.